A 545-amino-acid chain; its full sequence is Esterase-5C (545 aa).

A signal peptide spans methionine 1–alanine 19. Cysteine 84 and cysteine 103 are oxidised to a cystine. Asparagine 113 carries an N-linked (GlcNAc...) asparagine glycan. The active-site Acyl-ester intermediate is serine 207. Cysteine 259 and cysteine 271 form a disulfide bridge. N-linked (GlcNAc...) asparagine glycosylation occurs at asparagine 421. The Charge relay system role is filled by histidine 467. An N-linked (GlcNAc...) asparagine glycan is attached at asparagine 507. An intrachain disulfide couples cysteine 515 to cysteine 536.

The protein belongs to the type-B carboxylesterase/lipase family.

The protein localises to the secreted. The catalysed reaction is a carboxylic ester + H2O = an alcohol + a carboxylate + H(+). The chain is Esterase-5C (Est-5C) from Drosophila pseudoobscura pseudoobscura (Fruit fly).